Here is a 236-residue protein sequence, read N- to C-terminus: LexA repressor (236 aa).

The segment at residues 26-46 (FDEMKDALDLRSKSGIHRLIT) is a DNA-binding region (H-T-H motif). The segment at 85–109 (PSVIEGNLGKVRPPSPTPAEDDHDR) is disordered. Residues Ser157 and Lys195 each act as for autocatalytic cleavage activity in the active site.

It belongs to the peptidase S24 family. Homodimer.

The enzyme catalyses Hydrolysis of Ala-|-Gly bond in repressor LexA.. In terms of biological role, represses a number of genes involved in the response to DNA damage (SOS response), including recA and lexA. In the presence of single-stranded DNA, RecA interacts with LexA causing an autocatalytic cleavage which disrupts the DNA-binding part of LexA, leading to derepression of the SOS regulon and eventually DNA repair. The chain is LexA repressor from Rhodopseudomonas palustris (strain ATCC BAA-98 / CGA009).